The sequence spans 458 residues: MRNYPAEPYKVKAVEPIAMTTREQREAYMKKAGYNTFLLNSEEVYIDLLTDSGTSAMSDKQWAGLMIGDEAYAGSRNFMHLQDVVREYYGFKYVVPTHQGRGAENLLSTIMIKPGDYVPGNMYFTTTRAHQERNGATFVDIIIDEAHDSQIDLPFKGNVDVKKLQKLIDEVGADKIPYICLAVTVNLAGGQPVSMANMREVKALCSKHGIKVMFDATRCVENAYFIKEREAEYKDATIKDILKEMMSYADGCTMSGKKDCLVNIGGFLCINDDDLYQQACELVVLFEGMPSYGGLAGRDMEAMAIGITESVDFHYIQHRVAQCYYLADKLEAAGVPIVKPVGGHAVFLDAKKFLPHIPQEQFPAQMLAAQIYIEGGVRSMERGIVSAGRDKKTGANHTPKLELVRLTIPRRVYTYAHLDHVADTIIKLFKHRDDIKGLDMVYEPKLLRFFTARFEPKA.

Lys-258 is modified (N6-(pyridoxal phosphate)lysine).

Belongs to the beta-eliminating lyase family. As to quaternary structure, homotetramer. Requires pyridoxal 5'-phosphate as cofactor.

It catalyses the reaction L-tyrosine + H2O = phenol + pyruvate + NH4(+). The chain is Tyrosine phenol-lyase (tpl) from Pasteurella multocida (strain Pm70).